The following is a 468-amino-acid chain: ATP synthase subunit beta (468 aa).

155–162 contacts ATP; it reads GGAGVGKT.

This sequence belongs to the ATPase alpha/beta chains family. As to quaternary structure, F-type ATPases have 2 components, CF(1) - the catalytic core - and CF(0) - the membrane proton channel. CF(1) has five subunits: alpha(3), beta(3), gamma(1), delta(1), epsilon(1). CF(0) has three main subunits: a(1), b(2) and c(9-12). The alpha and beta chains form an alternating ring which encloses part of the gamma chain. CF(1) is attached to CF(0) by a central stalk formed by the gamma and epsilon chains, while a peripheral stalk is formed by the delta and b chains.

The protein localises to the cell membrane. The enzyme catalyses ATP + H2O + 4 H(+)(in) = ADP + phosphate + 5 H(+)(out). Produces ATP from ADP in the presence of a proton gradient across the membrane. The catalytic sites are hosted primarily by the beta subunits. This Bacillus cereus (strain ATCC 10987 / NRS 248) protein is ATP synthase subunit beta.